Consider the following 488-residue polypeptide: UDP-glycosyltransferase 92A1 (488 aa).

Residues serine 292, 358-360 (APQ), 375-383 (HCGWNSILE), and 397-400 (AAEQ) each bind UDP-alpha-D-glucose.

This sequence belongs to the UDP-glycosyltransferase family.

This chain is UDP-glycosyltransferase 92A1 (UGT92A1), found in Arabidopsis thaliana (Mouse-ear cress).